Consider the following 489-residue polypeptide: MSRRNFKVLYISGEVSPFVRTSALADFMASFPQALEEEGFEARIMMPKYGAINDRKFRLHDVLRLSDIEVPLKEKTDLLNVKVTALPSSKIQTYFLYNEKYFKRNGLFTDTPVQGELKALAEKVAFFNVGVLETLQRLGWRPDIIHCHDWYASLVPLLLKTVYRDHEFFRGIKTAMTIHNVYRQGVLPFKVLKKLLPDEVCSELHRSGDDVNMLYTGVEHADMLTTTSPSYAEEITGEAGNAFGLSEVLGERNMTLHGIVNGIDTRQWNPSTDKLIKKRYAPERMEGKTENKRALLEEIKLSPDTDRPVVGVIINFDEFQGAGLIAGSLKKLAAMDIQLVICGSGDQKYEKQFREFADAHPETVSLHTDCPDSFIHLAIAGFDILLMPGKIESCGMLQMFAMSYGTIPVAFAGGGIVETIDDYSEKDGYGFIFHDYTPKALVARLGAAVALYHDSERWKEIVGRAMARDFGWKHSAEEYGGLYRELLES.

Residue Arg20 participates in ADP-alpha-D-glucose binding.

Belongs to the glycosyltransferase 1 family. Bacterial/plant glycogen synthase subfamily.

The enzyme catalyses [(1-&gt;4)-alpha-D-glucosyl](n) + ADP-alpha-D-glucose = [(1-&gt;4)-alpha-D-glucosyl](n+1) + ADP + H(+). It functions in the pathway glycan biosynthesis; glycogen biosynthesis. Functionally, synthesizes alpha-1,4-glucan chains using ADP-glucose. The sequence is that of Glycogen synthase from Chlorobium phaeovibrioides (strain DSM 265 / 1930) (Prosthecochloris vibrioformis (strain DSM 265)).